The primary structure comprises 294 residues: Nucleotide-binding protein Reut_A0350 (294 aa).

ATP is bound at residue 8 to 15 (GISGSGKS). 57–60 (DIRS) serves as a coordination point for GTP.

This sequence belongs to the RapZ-like family.

In terms of biological role, displays ATPase and GTPase activities. The chain is Nucleotide-binding protein Reut_A0350 from Cupriavidus pinatubonensis (strain JMP 134 / LMG 1197) (Cupriavidus necator (strain JMP 134)).